Consider the following 316-residue polypeptide: MDKENFTRLRGELFCDHPLARYTSWRVGGKAERFYRPADLFDLQDFLTQLPSDEPLTWLGLGSNVLIRDGGIKGTVILTLNRLKELSVVNSQLAFREKSGTEDFFSGNGKTIIRAEAGVTCAKLAKFCVSQGLEDGAFFAGIPGTVGGALAMNAGAFGGETWRTVIGVETMNHQGEILKRTPDEFKIHYRQVEGLENQFFIAGYFCFNHGDPDKAKTAINALLKKRNLSQPIGKYSCGSVFRNPPGDYAARLIESAGLKGKSIGSAEVSEKHANFILNKGNASAADIEALIHYVAQHVSQIHGIQLVKEVHIIGRS.

Residues 27-225 (VGGKAERFYR…KTAINALLKK (199 aa)) form the FAD-binding PCMH-type domain. Residue R190 is part of the active site. The Proton donor role is filled by S239. The active site involves E309.

Belongs to the MurB family. FAD serves as cofactor.

The protein localises to the cytoplasm. The catalysed reaction is UDP-N-acetyl-alpha-D-muramate + NADP(+) = UDP-N-acetyl-3-O-(1-carboxyvinyl)-alpha-D-glucosamine + NADPH + H(+). Its pathway is cell wall biogenesis; peptidoglycan biosynthesis. Its function is as follows. Cell wall formation. The protein is UDP-N-acetylenolpyruvoylglucosamine reductase of Coxiella burnetii (strain CbuK_Q154) (Coxiella burnetii (strain Q154)).